Consider the following 76-residue polypeptide: Large ribosomal subunit protein uL29 (76 aa).

Belongs to the universal ribosomal protein uL29 family.

The chain is Large ribosomal subunit protein uL29 from Gloeothece citriformis (strain PCC 7424) (Cyanothece sp. (strain PCC 7424)).